The chain runs to 423 residues: Putative competence-damage inducible protein (423 aa).

It belongs to the CinA family.

The sequence is that of Putative competence-damage inducible protein from Streptococcus pyogenes serotype M49 (strain NZ131).